Here is a 518-residue protein sequence, read N- to C-terminus: 2-isopropylmalate synthase (518 aa).

The 263-residue stretch at 4-266 (INVFDTTLRD…DSSLNLHELK (263 aa)) folds into the Pyruvate carboxyltransferase domain. 4 residues coordinate Mn(2+): D13, H201, H203, and N237. Residues 391–518 (EFLSLQVHYG…GLKRQTAVGS (128 aa)) are regulatory domain.

It belongs to the alpha-IPM synthase/homocitrate synthase family. LeuA type 1 subfamily. As to quaternary structure, homodimer. Mn(2+) serves as cofactor.

The protein resides in the cytoplasm. The catalysed reaction is 3-methyl-2-oxobutanoate + acetyl-CoA + H2O = (2S)-2-isopropylmalate + CoA + H(+). It functions in the pathway amino-acid biosynthesis; L-leucine biosynthesis; L-leucine from 3-methyl-2-oxobutanoate: step 1/4. Its function is as follows. Catalyzes the condensation of the acetyl group of acetyl-CoA with 3-methyl-2-oxobutanoate (2-ketoisovalerate) to form 3-carboxy-3-hydroxy-4-methylpentanoate (2-isopropylmalate). This is 2-isopropylmalate synthase from Bacillus velezensis (strain DSM 23117 / BGSC 10A6 / LMG 26770 / FZB42) (Bacillus amyloliquefaciens subsp. plantarum).